We begin with the raw amino-acid sequence, 348 residues long: Methylthioribose-1-phosphate isomerase (348 aa).

Substrate is bound by residues 47–49, Arg90, and Gln196; that span reads RGA. Asp237 acts as the Proton donor in catalysis. 247–248 is a binding site for substrate; it reads NK.

It belongs to the eIF-2B alpha/beta/delta subunits family. MtnA subfamily.

The enzyme catalyses 5-(methylsulfanyl)-alpha-D-ribose 1-phosphate = 5-(methylsulfanyl)-D-ribulose 1-phosphate. Its pathway is amino-acid biosynthesis; L-methionine biosynthesis via salvage pathway; L-methionine from S-methyl-5-thio-alpha-D-ribose 1-phosphate: step 1/6. In terms of biological role, catalyzes the interconversion of methylthioribose-1-phosphate (MTR-1-P) into methylthioribulose-1-phosphate (MTRu-1-P). The sequence is that of Methylthioribose-1-phosphate isomerase from Synechococcus sp. (strain ATCC 27144 / PCC 6301 / SAUG 1402/1) (Anacystis nidulans).